A 336-amino-acid polypeptide reads, in one-letter code: Secreted effector protein SifA (336 aa).

The tract at residues 1 to 330 (MPITIGNGFL…LHVRSEQQSG (330 aa)) is interaction with host PLEKHM2.

Belongs to the Sif family. As to quaternary structure, interacts with host PLEKHM2. Interacts with SseJ; the interaction is indirect.

The protein localises to the secreted. It localises to the host cytoplasm. The protein resides in the host cell membrane. Functionally, effector proteins function to alter host cell physiology and promote bacterial survival in host tissues. This protein is required for endosomal tubulation and formation of Salmonella-induced filaments (Sifs), which are filamentous structures containing lysosomal membrane glycoproteins within epithelial cells. Sif formation is concomitant with intracellular bacterial replication. This chain is Secreted effector protein SifA (sifA), found in Salmonella typhimurium (strain LT2 / SGSC1412 / ATCC 700720).